The primary structure comprises 437 residues: Isthmin-2 (437 aa).

The signal sequence occupies residues 1–25 (MLRARKGLWVLLSVLLAFWIERAIS). The tract at residues 156 to 191 (DSGEDGTGQAEDEEDDYDYDSGEPIPSGLGKTDGDW) is disordered. The segment covering 165–176 (AEDEEDDYDYDS) has biased composition (acidic residues). Residues 197–242 (EEKEEEWSTWSPCSVTCGHGNQTRSRSCGDFCTSTESQSCDLVPCP) form the TSP type-1 domain. Cystine bridges form between C209/C236, C213/C241, and C224/C228. The N-linked (GlcNAc...) asparagine glycan is linked to N217. Residues N258 and N349 are each glycosylated (N-linked (GlcNAc...) asparagine). The AMOP domain maps to 262 to 425 (PYGTDVGSCE…LHCMENPQQD (164 aa)).

It belongs to the isthmin family.

The protein resides in the secreted. The chain is Isthmin-2 (ism2) from Danio rerio (Zebrafish).